Reading from the N-terminus, the 877-residue chain is Phosphoenolpyruvate carboxylase (877 aa).

Catalysis depends on residues histidine 138 and lysine 544.

Belongs to the PEPCase type 1 family. The cofactor is Mg(2+).

The catalysed reaction is oxaloacetate + phosphate = phosphoenolpyruvate + hydrogencarbonate. In terms of biological role, forms oxaloacetate, a four-carbon dicarboxylic acid source for the tricarboxylic acid cycle. The chain is Phosphoenolpyruvate carboxylase from Vibrio vulnificus (strain CMCP6).